The chain runs to 76 residues: MKNTLFRINELSKKEKATGLTVDEKQEQQMLRQNYTQTFRGSLDSILLNTKIVDQNGLNVTPAALQDAQIRLKLSK.

The protein belongs to the UPF0291 family.

It is found in the cytoplasm. The protein is UPF0291 protein BA_1897/GBAA_1897/BAS1759 of Bacillus anthracis.